Here is a 638-residue protein sequence, read N- to C-terminus: Exocyst complex component EXO70A1 (638 aa).

Positions 163 to 190 are disordered; sequence FDGLPNSLRPSSDGDGGGKPHGGHHNDD.

Belongs to the EXO70 family. As to quaternary structure, the exocyst complex is composed of SEC3, SEC5, SEC6, SEC8, SEC10, EXO70A1 and EXO84B. Interacts with SEC3A and EXO84B. Co-localizes with FPP3/VETH1, FPP2/VETH2 and COG2 in vesicle-like small motile compartments. May interact with COG2.

It is found in the cytoplasm. It localises to the cytosol. Its subcellular location is the cytoskeleton. The protein localises to the phragmoplast. The protein resides in the cell membrane. It is found in the secreted. It localises to the cell wall. In terms of biological role, component of the exocyst complex involved in the docking of exocytic vesicles with fusion sites on the plasma membrane during regulated or polarized secretion. Involved in polarized cell growth and organ morphogenesis. Involved in polarized cell growth and organ morphogenesis. During cytokinesis, involved in cell plate initiation, cell plate maturation and formation of new primary cell wall. Participates in polarized pectin delivery required for the polarized development of the mucilage-producing volcano cells of the seed coat. Involved in the recycling and localization of auxin efflux carriers PIN1 and PIN2, and thus in polar auxin transport regulation. Functions in vesicle trafficking in tracheary elements to regulate patterned secondary cell wall (SCW) thickening. This is Exocyst complex component EXO70A1 from Arabidopsis thaliana (Mouse-ear cress).